The sequence spans 259 residues: Isoprenyl transferase (259 aa).

Asp30 is an active-site residue. Asp30 contacts Mg(2+). Residues 31 to 34 (GNGR), Trp35, Arg43, His47, and 75 to 77 (STE) contribute to the substrate site. The active-site Proton acceptor is the Asn78. Substrate contacts are provided by residues Trp79, Arg81, Arg198, and 204–206 (RIS). Glu217 lines the Mg(2+) pocket.

The protein belongs to the UPP synthase family. As to quaternary structure, homodimer. The cofactor is Mg(2+).

Functionally, catalyzes the condensation of isopentenyl diphosphate (IPP) with allylic pyrophosphates generating different type of terpenoids. This Caulobacter vibrioides (strain ATCC 19089 / CIP 103742 / CB 15) (Caulobacter crescentus) protein is Isoprenyl transferase.